The primary structure comprises 105 residues: Met repressor (105 aa).

It belongs to the MetJ family. Homodimer.

It is found in the cytoplasm. Functionally, this regulatory protein, when combined with SAM (S-adenosylmethionine) represses the expression of the methionine regulon and of enzymes involved in SAM synthesis. This is Met repressor from Glaesserella parasuis serovar 5 (strain SH0165) (Haemophilus parasuis).